A 438-amino-acid polypeptide reads, in one-letter code: Fibrous sheath-interacting protein 1 (438 aa).

The tract at residues 1 to 111 (MSMDIIKGNL…PEHSDDPKLE (111 aa)) is disordered. The segment covering 18–32 (SSSRSRPGSRSSNGS) has biased composition (low complexity). Over residues 53 to 72 (SGKEGHTSDSRVEERRKISD) the composition is skewed to basic and acidic residues. Residues Ser-71, Ser-88, and Ser-89 each carry the phosphoserine modification. Positions 131–157 (LAKRRIREKEIKKQGLEMRIKLWEELK) form a coiled coil. Residues 354–390 (SQSNKGDMEHDSNEERNTEPTPGEKILRDNKEQRDRE) are disordered. Basic and acidic residues-rich tracts occupy residues 359–371 (GDME…ERNT) and 378–390 (KILR…RDRE).

Belongs to the FSIP1 family.

The protein is Fibrous sheath-interacting protein 1 (Fsip1) of Rattus norvegicus (Rat).